Reading from the N-terminus, the 184-residue chain is C-phycoerythrin class 1 subunit beta (184 aa).

C50 and C61 together coordinate (2R,3E)-phycoerythrobilin. N72 carries the N4-methylasparagine modification. Residues C82 and C165 each coordinate (2R,3E)-phycoerythrobilin.

It belongs to the phycobiliprotein family. Heterodimer of an alpha and a beta chain. Contains three covalently linked phycoerythrobilin chromophores.

The protein resides in the cellular thylakoid membrane. Functionally, light-harvesting photosynthetic bile pigment-protein from the phycobiliprotein complex. In Synechococcus sp. (strain WH8020), this protein is C-phycoerythrin class 1 subunit beta (cpeB).